The sequence spans 697 residues: Transmembrane protein 168 (697 aa).

A run of 3 helical transmembrane segments spans residues 36 to 56 (LGYL…YVRW), 63 to 83 (LILV…ILYY), and 89 to 109 (AASL…LCFL). Asn111 carries an N-linked (GlcNAc...) asparagine glycan. 5 helical membrane passes run 172–192 (MLVE…MLII), 199–219 (FLAI…SLET), 223–243 (PIAF…DIYF), 265–285 (LSVL…AFKL), and 293–313 (FVIP…IIFL). N-linked (GlcNAc...) asparagine glycosylation occurs at Asn337. The next 2 helical transmembrane spans lie at 352-372 (FCLI…ILGA) and 380-400 (GIFL…HGLF). 2 N-linked (GlcNAc...) asparagine glycosylation sites follow: Asn533 and Asn598.

It belongs to the TMEM168 family.

It is found in the nucleus membrane. Its function is as follows. Plays a key role in maintaining the cardiac electrical stability by modulating cell surface expression of SCN5A. Plays a role i the modulation of anxiety behavior by regulating GABAergic neuronal system in the nucleus accumbens. The protein is Transmembrane protein 168 (Tmem168) of Mus musculus (Mouse).